The sequence spans 80 residues: RNA-binding protein Hfq (80 aa).

The Sm domain occupies 10 to 70 (DLFLNTVRKQ…ISTIMPGQPL (61 aa)).

Belongs to the Hfq family. In terms of assembly, homohexamer.

Functionally, RNA chaperone that binds small regulatory RNA (sRNAs) and mRNAs to facilitate mRNA translational regulation in response to envelope stress, environmental stress and changes in metabolite concentrations. Also binds with high specificity to tRNAs. The chain is RNA-binding protein Hfq from Rhizobium meliloti (strain 1021) (Ensifer meliloti).